Consider the following 628-residue polypeptide: Otolith matrix protein OMM-64 (628 aa).

The signal sequence occupies residues 1-20 (MLSRLLIVPLIFALAGLAIS). The interval 43–628 (KGDKDGGGLT…AAATALAAQS (586 aa)) is disordered. Positions 78–93 (DSSPDTTDTPDASSSD) are enriched in low complexity. The segment covering 182 to 214 (TESPGSDSAESPGSDSAESPGSDSTESPGSDST) has biased composition (polar residues). 3 stretches are compositionally biased toward basic and acidic residues: residues 246–266 (ETDKDDDKSDDKSDADAATDK), 276–285 (ELDGKAHAED), and 311–343 (RPEKDVKNDSDDSKDTTEDDKPDKDDKKNRDSA). The N-linked (GlcNAc...) asparagine glycan is linked to asparagine 318. 5 stretches are compositionally biased toward acidic residues: residues 449-462 (DSQEDSVDESEAEP), 477-489 (EPQEDDSEEDTDD), 514-536 (DKEDMDKDDMDKDDMDKDDMDKD), 544-556 (DSVDDQSESDAEP), and 565-578 (DEIDGEETMTPDSE). The segment covering 613–628 (ASQAADAAATALAAQS) has biased composition (low complexity).

In terms of tissue distribution, specifically expressed in otolith matrix-producing cells.

Its subcellular location is the secreted. It is found in the extracellular space. The protein localises to the extracellular matrix. Functionally, calcium-binding component of otoliths, a calcium carbonate structure of the inner ear involved in hearing and balance sensing. Binds calcium. This Oncorhynchus mykiss (Rainbow trout) protein is Otolith matrix protein OMM-64.